Reading from the N-terminus, the 617-residue chain is Dihydroxy-acid dehydratase (617 aa).

D81 contributes to the Mg(2+) binding site. C122 contacts [2Fe-2S] cluster. Mg(2+) contacts are provided by D123 and K124. K124 is modified (N6-carboxylysine). C195 is a binding site for [2Fe-2S] cluster. E491 is a binding site for Mg(2+). S517 (proton acceptor) is an active-site residue.

Belongs to the IlvD/Edd family. Homodimer. The cofactor is [2Fe-2S] cluster. It depends on Mg(2+) as a cofactor.

It carries out the reaction (2R)-2,3-dihydroxy-3-methylbutanoate = 3-methyl-2-oxobutanoate + H2O. The enzyme catalyses (2R,3R)-2,3-dihydroxy-3-methylpentanoate = (S)-3-methyl-2-oxopentanoate + H2O. It participates in amino-acid biosynthesis; L-isoleucine biosynthesis; L-isoleucine from 2-oxobutanoate: step 3/4. It functions in the pathway amino-acid biosynthesis; L-valine biosynthesis; L-valine from pyruvate: step 3/4. Functionally, functions in the biosynthesis of branched-chain amino acids. Catalyzes the dehydration of (2R,3R)-2,3-dihydroxy-3-methylpentanoate (2,3-dihydroxy-3-methylvalerate) into 2-oxo-3-methylpentanoate (2-oxo-3-methylvalerate) and of (2R)-2,3-dihydroxy-3-methylbutanoate (2,3-dihydroxyisovalerate) into 2-oxo-3-methylbutanoate (2-oxoisovalerate), the penultimate precursor to L-isoleucine and L-valine, respectively. The chain is Dihydroxy-acid dehydratase from Buchnera aphidicola subsp. Schizaphis graminum (strain Sg).